We begin with the raw amino-acid sequence, 490 residues long: O-acetyltransferase PaAT-2 (490 aa).

Residue His165 is the Proton acceptor of the active site.

This sequence belongs to the plant acyltransferase family.

Its pathway is mycotoxin biosynthesis. O-acetyltransferase; part of the 2 gene clusters that mediate the biosynthesis of fusicoccins, diterpene glucosides that display phytohormone-like activity and function as potent activators of plasma membrane H(+)-ATPases in plants by modifying 14-3-3 proteins and cause the plant disease constriction canker. The first step in the pathway is performed by the fusicoccadiene synthase PaFS that possesses both prenyl transferase and terpene cyclase activity, converting isopentenyl diphosphate and dimethylallyl diphosphate into geranylgeranyl diphosphate (GGDP) and successively converting GGDP into fusicocca-2,10(14)-diene, a precursor for fusicoccin H. The second step is the oxidation at the C-8 position by the cytochrome P450 monooxygenase PaP450-2 to yield fusicocca-2,10(14)-diene-8-beta-ol. The cytochrome P450 monooxygenase PaP450-1 then catalyzes the hydroxylation at the C-16 position to produce fusicocca-2,10(14)-diene-8-beta,16-diol. The dioxygenase fc-dox then catalyzes the 16-oxydation of fusicocca-2,10(14)-diene-8-beta,16-diol to yield an aldehyde (8-beta-hydroxyfusicocca-1,10(14)-dien-16-al). The short-chain dehydrogenase/reductase fc-sdr catalyzes the reduction of the aldehyde to yield fusicocca-1,10(14)-diene-8-beta,16-diol. The next step is the hydroxylation at C-9 performed by the cytochrome P450 monooxygenase PaP450-3 that leads to fusicoccin H aglycon which is glycosylated to fusicoccin H by the O-glycosyltransferase PaGT. Hydroxylation at C-12 by the cytochrome P450 monooxygenase PaP450-4 leads then to the production of fusicoccin Q and is followed by methylation by the O-methyltransferase PaMT to yield fusicoccin P. Fusicoccin P is further converted to fusicoccin J via prenylation by the O-glucose prenyltransferase PaPT. Cytochrome P450 monooxygenase PaP450-5 then performs hydroxylation at C-19 to yield dideacetyl-fusicoccin A which is acetylated to 3'-O-deacetyl-fusicoccin A by the O-acetyltransferase PaAT-2. Finally, a another acetylation by the O-acetyltransferase PaAT-1 yields fusicoccin A. This chain is O-acetyltransferase PaAT-2, found in Phomopsis amygdali (Fusicoccum amygdali).